Here is a 1416-residue protein sequence, read N- to C-terminus: Non-structural polyprotein 1AB (1416 aa).

Residues Lys104–Lys146 are a coiled coil. Helical transmembrane passes span Met154–Ala174, Val239–Gly259, Val286–Val306, Leu313–Met333, and Gly344–Thr364. Catalysis depends on charge relay system; for serine protease activity residues His461, Asp489, and Ser551. Residues Val587–Pro614 are a coiled coil. Position 693 is an O-(5'-phospho-RNA)-tyrosine (Tyr693). The tract at residues Asn752–Gly815 is disordered. Over residues Ser783–Gln795 the composition is skewed to basic and acidic residues. Residues Asn805 to Tyr814 are compositionally biased toward polar residues. A RdRp catalytic domain is found at Lys1161–Glu1287.

It belongs to the astroviridae polyprotein 1AB family. Monomer. Cleaved by the viral and host proteases. The protease is probably autocatalytically cleaved.

It is found in the host membrane. The catalysed reaction is RNA(n) + a ribonucleoside 5'-triphosphate = RNA(n+1) + diphosphate. Functionally, responsible for the cleavage of the polyprotein into functional products. Protein covalently attached to the 5' extremity of the genomic and subgenomic RNAs. It may serve as a primer for the replicase. The sequence is that of Non-structural polyprotein 1AB (ORF1) from Homo sapiens (Human).